We begin with the raw amino-acid sequence, 696 residues long: DNA ligase (696 aa).

NAD(+)-binding positions include 36 to 40 (DAVYD), 85 to 86 (SL), and Glu124. Lys126 serves as the catalytic N6-AMP-lysine intermediate. The NAD(+) site is built by Arg147, Glu184, Lys308, and Lys332. Positions 426, 429, 444, and 449 each coordinate Zn(2+). The BRCT domain occupies 618–696 (QRTVSLQGQT…EEELLKLLAS (79 aa)).

This sequence belongs to the NAD-dependent DNA ligase family. LigA subfamily. The cofactor is Mg(2+). Mn(2+) serves as cofactor.

The enzyme catalyses NAD(+) + (deoxyribonucleotide)n-3'-hydroxyl + 5'-phospho-(deoxyribonucleotide)m = (deoxyribonucleotide)n+m + AMP + beta-nicotinamide D-nucleotide.. DNA ligase that catalyzes the formation of phosphodiester linkages between 5'-phosphoryl and 3'-hydroxyl groups in double-stranded DNA using NAD as a coenzyme and as the energy source for the reaction. It is essential for DNA replication and repair of damaged DNA. The protein is DNA ligase of Prochlorococcus marinus (strain MIT 9303).